The sequence spans 86 residues: MGISIWQLLIILAIVLVLFGAKRLKNVGSDLGGAIKGFKKAVSDEDKKEDEKVTAEQKLEQKEGENVFDVKAEQKADEKSETKDKA.

The chain crosses the membrane as a helical span at residues 1 to 21 (MGISIWQLLIILAIVLVLFGA).

Belongs to the TatA/E family. In terms of assembly, the Tat system comprises two distinct complexes: a TatABC complex, containing multiple copies of TatA, TatB and TatC subunits, and a separate TatA complex, containing only TatA subunits. Substrates initially bind to the TatABC complex, which probably triggers association of the separate TatA complex to form the active translocon.

Its subcellular location is the cell inner membrane. In terms of biological role, part of the twin-arginine translocation (Tat) system that transports large folded proteins containing a characteristic twin-arginine motif in their signal peptide across membranes. TatA could form the protein-conducting channel of the Tat system. The sequence is that of Sec-independent protein translocase protein TatA from Hydrogenovibrio crunogenus (strain DSM 25203 / XCL-2) (Thiomicrospira crunogena).